A 247-amino-acid polypeptide reads, in one-letter code: TM2 domain-containing protein 3 (247 aa).

The N-terminal stretch at 1–30 (MDLMMALKRVCRVLLFVTQMYVFSGRGSLS) is a signal peptide. At 31–179 (FEYSQPVAQP…RTFPKMLYCN (149 aa)) the chain is on the extracellular side. N-linked (GlcNAc...) asparagine glycosylation is found at asparagine 87, asparagine 99, asparagine 139, asparagine 155, asparagine 169, and asparagine 179. Residues 180–200 (WTGGYKWSTALALSITLGGFG) form a helical membrane-spanning segment. One can recognise a TM2 domain in the interval 183-231 (GYKWSTALALSITLGGFGADRFYLGQWREGLGKLFSFGGLGIWTLIDVF). At 201–215 (ADRFYLGQWREGLGK) the chain is on the cytoplasmic side. A helical transmembrane segment spans residues 216 to 236 (LFSFGGLGIWTLIDVFLISVG). The Extracellular segment spans residues 237–247 (YVGPADGSLYI).

It belongs to the TM2 family.

It is found in the membrane. In Xenopus laevis (African clawed frog), this protein is TM2 domain-containing protein 3 (tm2d3).